We begin with the raw amino-acid sequence, 397 residues long: Ribosomal RNA large subunit methyltransferase I (397 aa).

The PUA domain occupies Thr-2 to Lys-82.

This sequence belongs to the methyltransferase superfamily. RlmI family.

It is found in the cytoplasm. The catalysed reaction is cytidine(1962) in 23S rRNA + S-adenosyl-L-methionine = 5-methylcytidine(1962) in 23S rRNA + S-adenosyl-L-homocysteine + H(+). Specifically methylates the cytosine at position 1962 (m5C1962) of 23S rRNA. This is Ribosomal RNA large subunit methyltransferase I from Photobacterium profundum (strain SS9).